A 435-amino-acid polypeptide reads, in one-letter code: MDWLQLFFLHPLSFYQGAAFPFALLFNYLCILDTFSTRARYLFLLAGGGVLAFAAMGPYSLLIFIPALCAVALVSFLSPQEVHRLTFFFQMGWQTLCHLGLHYTEYYLGEPPPVRFYITLSSLMLLTQRVTSLSLDICEGKVEAPRRGIRSKSSFSEHLWDALPHFSYLLFFPALLGGSLCSFRRFQACVQRSSSLYPSISFRALTWRGLQILGLECLKVALRSAVSAGAGLDDCQRLECIYLMWSTAWLFKLTYYSHWILDDSLLHAAGFGAEAGQGPGEEGYVPDVDIWTLETTHRISLFARQWNRSTALWLRRLVFRKSRRWPLLQTFAFSAWWHGLHPGQVFGFLCWSVMVKADYLIHTFANVCIRSWPLRLLYRALTWAHTQLIIAYIMLAVEGRSLSSLCQLCCSYNSLFPVMYGLLLFLLAERKDKRN.

Residues 1-5 (MDWLQ) lie on the Lumenal side of the membrane. The chain crosses the membrane as a helical span at residues 6–26 (LFFLHPLSFYQGAAFPFALLF). At 27 to 40 (NYLCILDTFSTRAR) the chain is on the cytoplasmic side. A helical transmembrane segment spans residues 41-56 (YLFLLAGGGVLAFAAM). Over 57–59 (GPY) the chain is Lumenal. A helical membrane pass occupies residues 60–76 (SLLIFIPALCAVALVSF). Topologically, residues 77 to 82 (LSPQEV) are cytoplasmic. Residues 83–101 (HRLTFFFQMGWQTLCHLGL) traverse the membrane as a helical segment. Over 102-120 (HYTEYYLGEPPPVRFYITL) the chain is Lumenal. A helical membrane pass occupies residues 121-136 (SSLMLLTQRVTSLSLD). Over 137 to 206 (ICEGKVEAPR…YPSISFRALT (70 aa)) the chain is Cytoplasmic. The chain crosses the membrane as a helical span at residues 207–227 (WRGLQILGLECLKVALRSAVS). At 228-240 (AGAGLDDCQRLEC) the chain is on the lumenal side. Residues 241–261 (IYLMWSTAWLFKLTYYSHWIL) traverse the membrane as a helical segment. The Cytoplasmic portion of the chain corresponds to 262 to 324 (DDSLLHAAGF…RRLVFRKSRR (63 aa)). Residues asparagine 307 and histidine 338 contribute to the active site. A helical transmembrane segment spans residues 325–338 (WPLLQTFAFSAWWH). Residues 339-340 (GL) lie on the Lumenal side of the membrane. Residues 341–357 (HPGQVFGFLCWSVMVKA) form a helical membrane-spanning segment. Residues 358 to 376 (DYLIHTFANVCIRSWPLRL) are Cytoplasmic-facing. Residues 377-397 (LYRALTWAHTQLIIAYIMLAV) traverse the membrane as a helical segment. Residues 398–407 (EGRSLSSLCQ) are Lumenal-facing. Residues 408–428 (LCCSYNSLFPVMYGLLLFLLA) form a helical membrane-spanning segment. The Cytoplasmic portion of the chain corresponds to 429 to 435 (ERKDKRN).

Belongs to the membrane-bound acyltransferase family. As to quaternary structure, monomer. In terms of processing, not glycosylated. As to expression, highly expressed in stomach and pancreas. Lower expression in small intestine and colon. Very low expression in testis.

The protein localises to the endoplasmic reticulum membrane. The catalysed reaction is octanoyl-CoA + L-seryl-[protein] = O-octanoyl-L-seryl-[protein] + CoA. It catalyses the reaction hexanoyl-CoA + L-seryl-[protein] = O-hexanoyl-L-seryl-[protein] + CoA. It carries out the reaction decanoyl-CoA + L-seryl-[protein] = O-decanoyl-L-seryl-[protein] + CoA. The enzyme catalyses L-seryl-[protein] + acetyl-CoA = O-acetyl-L-seryl-[protein] + CoA. The catalysed reaction is L-seryl-[protein] + butanoyl-CoA = O-butanoyl-L-seryl-[protein] + CoA. It catalyses the reaction pentanoyl-CoA + L-seryl-[protein] = O-pentanoyl-L-seryl-[protein] + CoA. It carries out the reaction heptanoyl-CoA + L-seryl-[protein] = O-heptanoyl-L-seryl-[protein] + CoA. The enzyme catalyses nonanoyl-CoA + L-seryl-[protein] = O-nonanoyl-L-seryl-[protein] + CoA. The catalysed reaction is L-seryl-[protein] + dodecanoyl-CoA = O-dodecanoyl-L-seryl-[protein] + CoA. It catalyses the reaction L-seryl-[protein] + tetradecanoyl-CoA = O-tetradecanoyl-L-seryl-[protein] + CoA. It carries out the reaction a fatty acyl-CoA + L-seryl-[protein] = O-fatty acyl-L-seryl-[protein] + CoA. Its activity is regulated as follows. Inhibited by 1-[2-cyano-3,12-dioxooleana-1,9(11)- dien-28-oyl]ethylamide (CDDO-EA) with an IC(50) of 60 uM. Inhibited by Fe3+ and Cu2+ and the O-acyltransferase activity is completely blocked over 5 mM Fe3+ and 0.5 mM Cu2+. Functionally, catalyzes ghrelin acylation at 'Ser-3' using preferentially octanoyl-CoA, hexanoyl-CoA and decanoyl-CoA as acyl-CoA donors leading to ghrelin activity. In vitro also uses acyl-CoA donors of different lengths from short-chain (C2) to long-chain fatty acids (C16) knowing that acyl-CoA donors from butanoyl-CoA (C4) to dodecanoyl-CoA (C12) are more efficient compared to longer acyl-CoA donors, such as myristoyl-CoA (C14) and palmitoyl-CoA (C16) that are not efficient. Inactive octanoyltransferase activity. The protein is Membrane-bound ghrelin O-acyltransferase MBOAT4 of Mus musculus (Mouse).